Reading from the N-terminus, the 450-residue chain is Bifunctional protein GlmU (450 aa).

Residues 1 to 228 (MSTALVILAA…EAQTLGVNSR (228 aa)) are pyrophosphorylase. Residues 8–11 (LAAG), lysine 22, glutamine 75, 80–81 (GT), 103–105 (YGD), glycine 140, glutamate 154, asparagine 169, and asparagine 226 each bind UDP-N-acetyl-alpha-D-glucosamine. Residue aspartate 105 coordinates Mg(2+). Position 226 (asparagine 226) interacts with Mg(2+). The linker stretch occupies residues 229 to 249 (ADLAAADAIFQTRARAELLDL). The tract at residues 250-450 (GVTLMAPETV…AKKASKQKET (201 aa)) is N-acetyltransferase. Positions 315 and 333 each coordinate UDP-N-acetyl-alpha-D-glucosamine. Histidine 345 acts as the Proton acceptor in catalysis. Tyrosine 348 and asparagine 359 together coordinate UDP-N-acetyl-alpha-D-glucosamine. Acetyl-CoA contacts are provided by residues alanine 362, 368 to 369 (NY), serine 387, threonine 405, and arginine 422.

This sequence in the N-terminal section; belongs to the N-acetylglucosamine-1-phosphate uridyltransferase family. The protein in the C-terminal section; belongs to the transferase hexapeptide repeat family. In terms of assembly, homotrimer. Mg(2+) is required as a cofactor.

The protein resides in the cytoplasm. It catalyses the reaction alpha-D-glucosamine 1-phosphate + acetyl-CoA = N-acetyl-alpha-D-glucosamine 1-phosphate + CoA + H(+). The enzyme catalyses N-acetyl-alpha-D-glucosamine 1-phosphate + UTP + H(+) = UDP-N-acetyl-alpha-D-glucosamine + diphosphate. Its pathway is nucleotide-sugar biosynthesis; UDP-N-acetyl-alpha-D-glucosamine biosynthesis; N-acetyl-alpha-D-glucosamine 1-phosphate from alpha-D-glucosamine 6-phosphate (route II): step 2/2. It functions in the pathway nucleotide-sugar biosynthesis; UDP-N-acetyl-alpha-D-glucosamine biosynthesis; UDP-N-acetyl-alpha-D-glucosamine from N-acetyl-alpha-D-glucosamine 1-phosphate: step 1/1. The protein operates within bacterial outer membrane biogenesis; LPS lipid A biosynthesis. In terms of biological role, catalyzes the last two sequential reactions in the de novo biosynthetic pathway for UDP-N-acetylglucosamine (UDP-GlcNAc). The C-terminal domain catalyzes the transfer of acetyl group from acetyl coenzyme A to glucosamine-1-phosphate (GlcN-1-P) to produce N-acetylglucosamine-1-phosphate (GlcNAc-1-P), which is converted into UDP-GlcNAc by the transfer of uridine 5-monophosphate (from uridine 5-triphosphate), a reaction catalyzed by the N-terminal domain. This Ruegeria pomeroyi (strain ATCC 700808 / DSM 15171 / DSS-3) (Silicibacter pomeroyi) protein is Bifunctional protein GlmU.